The primary structure comprises 501 residues: Type B diterpene cyclase (501 aa).

This sequence belongs to the terpene synthase family. Monomer. Mg(2+) serves as cofactor.

The enzyme catalyses geranylgeranyl diphosphate = tuberculosinyl diphosphate. Its activity is regulated as follows. Strongly inhibited by 15-aza-dihydrogeranylgeraniol and 5-isopropyl-N,N,N,2-tetramethyl-4-(piperidine-1-carbonyloxy)benzenaminium chloride (Amo-1618). Inhibited by GGPP concentrations higher than 50 uM. Its function is as follows. Catalyzes the formation of tuberculosinyl diphosphate from geranylgeranyl diphosphate (GGPP). It could also react with (14R/S)-14,15-oxidoGGPP to generate 3alpha- and 3beta-hydroxytuberculosinyl diphosphate. The protein is Type B diterpene cyclase of Mycobacterium tuberculosis (strain ATCC 25618 / H37Rv).